Consider the following 173-residue polypeptide: Bifunctional protein PyrR (173 aa).

Substrate-binding positions include 40-41 (TR), 97-105 (DDVLYTGRT), and Arg-130. A PRPP-binding motif is present at residues 93–105 (VILIDDVLYTGRT).

This sequence belongs to the purine/pyrimidine phosphoribosyltransferase family. PyrR subfamily. In terms of assembly, homodimer and homohexamer; in equilibrium.

The catalysed reaction is UMP + diphosphate = 5-phospho-alpha-D-ribose 1-diphosphate + uracil. Regulates transcriptional attenuation of the pyrimidine nucleotide (pyr) operon by binding in a uridine-dependent manner to specific sites on pyr mRNA. This disrupts an antiterminator hairpin in the RNA and favors formation of a downstream transcription terminator, leading to a reduced expression of downstream genes. In terms of biological role, also displays a weak uracil phosphoribosyltransferase activity which is not physiologically significant. The sequence is that of Bifunctional protein PyrR from Streptococcus pyogenes serotype M6 (strain ATCC BAA-946 / MGAS10394).